We begin with the raw amino-acid sequence, 115 residues long: Histidine decarboxylase proenzyme (115 aa).

The residue at position 83 (Ser-83) is a Pyruvic acid (Ser).

As to quaternary structure, the proenzyme is a hexamer of identical pi chains; each pi chain monomer is cleaved to form a small (or beta) chain and a large (or alpha) chain by non-hydrolytic self-catalysis. Requires pyruvate as cofactor.

The catalysed reaction is L-histidine + H(+) = histamine + CO2. The protein is Histidine decarboxylase proenzyme of Lentilactobacillus buchneri (Lactobacillus buchneri).